The sequence spans 414 residues: Serine hydroxymethyltransferase (414 aa).

(6S)-5,6,7,8-tetrahydrofolate is bound by residues L121 and 125-127; that span reads GHL. K229 is subject to N6-(pyridoxal phosphate)lysine.

It belongs to the SHMT family. Homodimer. The cofactor is pyridoxal 5'-phosphate.

It localises to the cytoplasm. It carries out the reaction (6R)-5,10-methylene-5,6,7,8-tetrahydrofolate + glycine + H2O = (6S)-5,6,7,8-tetrahydrofolate + L-serine. It participates in one-carbon metabolism; tetrahydrofolate interconversion. It functions in the pathway amino-acid biosynthesis; glycine biosynthesis; glycine from L-serine: step 1/1. Its function is as follows. Catalyzes the reversible interconversion of serine and glycine with tetrahydrofolate (THF) serving as the one-carbon carrier. This reaction serves as the major source of one-carbon groups required for the biosynthesis of purines, thymidylate, methionine, and other important biomolecules. Also exhibits THF-independent aldolase activity toward beta-hydroxyamino acids, producing glycine and aldehydes, via a retro-aldol mechanism. The chain is Serine hydroxymethyltransferase from Acidovorax ebreus (strain TPSY) (Diaphorobacter sp. (strain TPSY)).